The chain runs to 446 residues: MREVISVHVGQAGVQIGNACWELYTLEHGLSPDGRLMDDSPSKHDSGSTFFSETGQGKHVPRRLYVDLEPGVIDDVKNGPYRSLFHPETMITGKEDAANNYARGHYTVGKELIDPVMDKLRRLADNCSGRQGLFVFHSFGGGTGSGFGALLLERLSTDYGKKAKLEFCVYPAPQLSSSVVEPYNSLLTTHTTLEHSDCSFMVDNEAIYDICKKNLGVAQPGFTNLNRLIAQVVSSITASLRFDGSLNVDLNEFQTNLVPFPRIHFPLASYAPLLSAPRRQHEQNSVEEMTFSCFESGNQMVKCDAKDGKYMACCLLYRGDVVPKDTQAAVASIKTKRTIQFVDWCPTGFKLGVCNEAPATVPGGDLAKVPRSLCMLSNTTAIAAAWNRLDYKFDLMYRKRAFVHWYVGEAMEEGEFSEAREDLAALEKDYEEVGTDSADAEEEGEY.

Gln11 lines the GTP pocket. Residues 34-55 (GRLMDDSPSKHDSGSTFFSETG) form a disordered region. A compositionally biased stretch (basic and acidic residues) spans 35–46 (RLMDDSPSKHDS). The GTP site is built by Glu69, Ser138, Gly142, Thr143, Ser177, Asn204, and Asn226. Glu69 is a Mg(2+) binding site. Glu252 is an active-site residue.

The protein belongs to the tubulin family. As to quaternary structure, dimer of alpha and beta chains. A typical microtubule is a hollow water-filled tube with an outer diameter of 25 nm and an inner diameter of 15 nM. Alpha-beta heterodimers associate head-to-tail to form protofilaments running lengthwise along the microtubule wall with the beta-tubulin subunit facing the microtubule plus end conferring a structural polarity. Microtubules usually have 13 protofilaments but different protofilament numbers can be found in some organisms and specialized cells. Requires Mg(2+) as cofactor.

Its subcellular location is the cytoplasm. It localises to the cytoskeleton. The catalysed reaction is GTP + H2O = GDP + phosphate + H(+). Its function is as follows. Tubulin is the major constituent of microtubules, a cylinder consisting of laterally associated linear protofilaments composed of alpha- and beta-tubulin heterodimers. Microtubules grow by the addition of GTP-tubulin dimers to the microtubule end, where a stabilizing cap forms. Below the cap, tubulin dimers are in GDP-bound state, owing to GTPase activity of alpha-tubulin. The polypeptide is Tubulin alpha-1B chain (TUB-1B) (Schizophyllum commune (Split gill fungus)).